Here is a 162-residue protein sequence, read N- to C-terminus: uncharacterized protein (162 aa).

The disordered stretch occupies residues 1–49 (MNSRTASARGWFSSRPPTSESDLEPATDGPASETTTLSPEATTFNDTRI). Residues 32–46 (SETTTLSPEATTFND) are compositionally biased toward polar residues. A helical membrane pass occupies residues 62 to 82 (MLLSFGIITVIGLAVALVLYI).

It is found in the membrane. This is an uncharacterized protein from Homo sapiens (Human).